Reading from the N-terminus, the 360-residue chain is NAD(P)H-quinone oxidoreductase subunit 1, chloroplastic (360 aa).

The next 9 helical transmembrane spans lie at 27 to 47 (IWIF…VLVI), 98 to 118 (FSIG…VIPF), 129 to 149 (IGIF…LMSG), 165 to 185 (AAQS…ISLL), 203 to 223 (FWGW…ISSL), 248 to 268 (YSGI…LISS), 269 to 289 (LFVT…ISIL), 297 to 317 (IFGT…FLFI), and 340 to 360 (FLLP…LFSL).

The protein belongs to the complex I subunit 1 family. NDH is composed of at least 16 different subunits, 5 of which are encoded in the nucleus.

It localises to the plastid. Its subcellular location is the chloroplast thylakoid membrane. It catalyses the reaction a plastoquinone + NADH + (n+1) H(+)(in) = a plastoquinol + NAD(+) + n H(+)(out). It carries out the reaction a plastoquinone + NADPH + (n+1) H(+)(in) = a plastoquinol + NADP(+) + n H(+)(out). In terms of biological role, NDH shuttles electrons from NAD(P)H:plastoquinone, via FMN and iron-sulfur (Fe-S) centers, to quinones in the photosynthetic chain and possibly in a chloroplast respiratory chain. The immediate electron acceptor for the enzyme in this species is believed to be plastoquinone. Couples the redox reaction to proton translocation, and thus conserves the redox energy in a proton gradient. This chain is NAD(P)H-quinone oxidoreductase subunit 1, chloroplastic, found in Olimarabidopsis pumila (Dwarf rocket).